The primary structure comprises 201 residues: Single-stranded DNA-binding protein DdrA (201 aa).

It belongs to the RAD52 family. In terms of assembly, the truncated form (1-160) of DdrA forms heptameric rings that can assemble into a 3-ring structure.

Functionally, ssDNA-binding protein that contributes to the ionizing radiation resistance of D.deserti. Plays a role in DNA repair and genome reconstitution, in a RecA-independent process, since DdrA is essential for recovery from severe genomic fragmentation as a result of exposure to severe levels of ionizing radiation in an environment lacking nutrients. In vitro, binds to the 3'-ends of single-stranded DNA, and probably protects them from nuclease degradation. Thus, DdrA is part of a DNA end-protection system that helps to preserve genome integrity following irradiation or desiccation. In Deinococcus deserti (strain DSM 17065 / CIP 109153 / LMG 22923 / VCD115), this protein is Single-stranded DNA-binding protein DdrA (ddrA).